We begin with the raw amino-acid sequence, 119 residues long: Large ribosomal subunit protein uL18 (119 aa).

The protein belongs to the universal ribosomal protein uL18 family. As to quaternary structure, part of the 50S ribosomal subunit; part of the 5S rRNA/L5/L18/L25 subcomplex. Contacts the 5S and 23S rRNAs.

In terms of biological role, this is one of the proteins that bind and probably mediate the attachment of the 5S RNA into the large ribosomal subunit, where it forms part of the central protuberance. In Solibacter usitatus (strain Ellin6076), this protein is Large ribosomal subunit protein uL18.